A 187-amino-acid chain; its full sequence is Orotate phosphoribosyltransferase (187 aa).

5-phospho-alpha-D-ribose 1-diphosphate contacts are provided by residues Arg103, Lys104, Lys107, and 129–137 (EDVTTSGGS). The orotate site is built by Thr133 and Arg161.

This sequence belongs to the purine/pyrimidine phosphoribosyltransferase family. PyrE subfamily. In terms of assembly, homodimer. Mg(2+) serves as cofactor.

The catalysed reaction is orotidine 5'-phosphate + diphosphate = orotate + 5-phospho-alpha-D-ribose 1-diphosphate. It functions in the pathway pyrimidine metabolism; UMP biosynthesis via de novo pathway; UMP from orotate: step 1/2. Functionally, catalyzes the transfer of a ribosyl phosphate group from 5-phosphoribose 1-diphosphate to orotate, leading to the formation of orotidine monophosphate (OMP). This Methanosarcina mazei (strain ATCC BAA-159 / DSM 3647 / Goe1 / Go1 / JCM 11833 / OCM 88) (Methanosarcina frisia) protein is Orotate phosphoribosyltransferase.